The sequence spans 211 residues: Claudin-1 (211 aa).

Residues 1 to 7 are Cytoplasmic-facing; the sequence is MANAGLQ. Residues 8 to 28 traverse the membrane as a helical segment; that stretch reads LLGFILASLGWIGSIVSTALP. Residues 29 to 81 lie on the Extracellular side of the membrane; sequence QWKIYSYAGDNIVTAQAIYEGLWMSCVSQSTGQIQCKVFDSLLNLNSTLQATR. A disulfide bond links cysteine 54 and cysteine 64. Residues 82-102 traverse the membrane as a helical segment; it reads ALMVIGILLGLIAIFVSTIGM. Over 103-115 the chain is Cytoplasmic; it reads KCMRCLEDDEVQK. The chain crosses the membrane as a helical span at residues 116–136; sequence MWMAVIGGIIFLISGLATLVA. Over 137–163 the chain is Extracellular; the sequence is TAWYGNRIVQEFYDPLTPINARYEFGQ. Residues 164–184 form a helical membrane-spanning segment; it reads ALFTGWAAASLCLLGGVLLSC. Topologically, residues 185-211 are cytoplasmic; that stretch reads SCPRKTTSYPTPRPYPKPTPSSGKDYV. The segment at 190-211 is disordered; that stretch reads TTSYPTPRPYPKPTPSSGKDYV. The segment at 210–211 is interactions with TJP1, TJP2, TJP3 and PATJ; it reads YV.

It belongs to the claudin family. In terms of assembly, can form homo- and heteropolymers with other CLDN. Homopolymers interact with CLDN3, but not CLDN2, homopolymers. Directly interacts with TJP1/ZO-1, TJP2/ZO-2 and TJP3/ZO-3. Interacts with MPDZ and PATJ. Interacts with OCLN, CD81, CLDN4, CLDN6 and CLDN9. In terms of tissue distribution, detected in epidermis and liver (at protein level). Widely expressed, with highest levels in liver and kidney.

The protein localises to the cell junction. The protein resides in the tight junction. It is found in the cell membrane. Its subcellular location is the basolateral cell membrane. Functionally, claudins function as major constituents of the tight junction complexes that regulate the permeability of epithelia. While some claudin family members play essential roles in the formation of impermeable barriers, others mediate the permeability to ions and small molecules. Often, several claudin family members are coexpressed and interact with each other, and this determines the overall permeability. CLDN1 is required to prevent the paracellular diffusion of small molecules through tight junctions in the epidermis and is required for the normal barrier function of the skin. Required for normal water homeostasis and to prevent excessive water loss through the skin, probably via an indirect effect on the expression levels of other proteins, since CLDN1 itself seems to be dispensable for water barrier formation in keratinocyte tight junctions. This chain is Claudin-1 (Cldn1), found in Mus musculus (Mouse).